A 230-amino-acid chain; its full sequence is 2,3-bisphosphoglycerate-dependent phosphoglycerate mutase (230 aa).

Substrate contacts are provided by residues R10–N17, T23–G24, R62, E89–Y92, K100, R116–R117, and G185–N186. H11 serves as the catalytic Tele-phosphohistidine intermediate. Catalysis depends on E89, which acts as the Proton donor/acceptor.

This sequence belongs to the phosphoglycerate mutase family. BPG-dependent PGAM subfamily. As to quaternary structure, homodimer.

The enzyme catalyses (2R)-2-phosphoglycerate = (2R)-3-phosphoglycerate. The protein operates within carbohydrate degradation; glycolysis; pyruvate from D-glyceraldehyde 3-phosphate: step 3/5. Catalyzes the interconversion of 2-phosphoglycerate and 3-phosphoglycerate. This is 2,3-bisphosphoglycerate-dependent phosphoglycerate mutase from Buchnera aphidicola subsp. Schizaphis graminum (strain Sg).